Consider the following 214-residue polypeptide: Adenylate kinase (214 aa).

10–15 (GSGKGT) contributes to the ATP binding site. An NMP region spans residues 30-59 (STGDMLRAAVREGTPLGMEAKKIMDAGQLV). AMP is bound by residues T31, R36, 57–59 (QLV), 85–88 (GFPR), and Q92. The segment at 122-159 (GRRVHPASGRTYHVVFNPPKVEGRDDETGEPLVQREDD) is LID. Residues R123 and 132–133 (TY) each bind ATP. AMP-binding residues include R156 and R167. G200 lines the ATP pocket.

This sequence belongs to the adenylate kinase family. As to quaternary structure, monomer.

It is found in the cytoplasm. The enzyme catalyses AMP + ATP = 2 ADP. The protein operates within purine metabolism; AMP biosynthesis via salvage pathway; AMP from ADP: step 1/1. Functionally, catalyzes the reversible transfer of the terminal phosphate group between ATP and AMP. Plays an important role in cellular energy homeostasis and in adenine nucleotide metabolism. This Methylococcus capsulatus (strain ATCC 33009 / NCIMB 11132 / Bath) protein is Adenylate kinase.